The chain runs to 302 residues: Aspartate carbamoyltransferase catalytic subunit (302 aa).

Positions 54 and 55 each coordinate carbamoyl phosphate. L-aspartate is bound at residue K82. The carbamoyl phosphate site is built by R104, H132, and Q135. L-aspartate is bound by residues R165 and R217. Positions 257 and 258 each coordinate carbamoyl phosphate.

Belongs to the aspartate/ornithine carbamoyltransferase superfamily. ATCase family. Heterododecamer (2C3:3R2) of six catalytic PyrB chains organized as two trimers (C3), and six regulatory PyrI chains organized as three dimers (R2).

It carries out the reaction carbamoyl phosphate + L-aspartate = N-carbamoyl-L-aspartate + phosphate + H(+). Its pathway is pyrimidine metabolism; UMP biosynthesis via de novo pathway; (S)-dihydroorotate from bicarbonate: step 2/3. Functionally, catalyzes the condensation of carbamoyl phosphate and aspartate to form carbamoyl aspartate and inorganic phosphate, the committed step in the de novo pyrimidine nucleotide biosynthesis pathway. The chain is Aspartate carbamoyltransferase catalytic subunit from Thermus thermophilus (strain ATCC BAA-163 / DSM 7039 / HB27).